Reading from the N-terminus, the 240-residue chain is Transcription factor bHLH101 (240 aa).

The bHLH domain maps to 65–117 (EKKLNHNASERDRRRKLNALYSSLRALLPLSDQKRKLSIPMTVARVVKYIPEQ).

Homodimer. Flowers.

The protein localises to the nucleus. The protein is Transcription factor bHLH101 (BHLH101) of Arabidopsis thaliana (Mouse-ear cress).